Consider the following 118-residue polypeptide: Large ribosomal subunit protein bL20 (118 aa).

Belongs to the bacterial ribosomal protein bL20 family.

Binds directly to 23S ribosomal RNA and is necessary for the in vitro assembly process of the 50S ribosomal subunit. It is not involved in the protein synthesizing functions of that subunit. The sequence is that of Large ribosomal subunit protein bL20 from Caulobacter vibrioides (strain ATCC 19089 / CIP 103742 / CB 15) (Caulobacter crescentus).